A 493-amino-acid chain; its full sequence is Succinate-semialdehyde dehydrogenase [NADP(+)] 2 (493 aa).

242 to 247 (GSTNVG) serves as a coordination point for NAD(+). Glutamate 264 is a catalytic residue. Residue cysteine 298 is the Nucleophile of the active site.

This sequence belongs to the aldehyde dehydrogenase family. As to quaternary structure, homotetramer.

Its subcellular location is the cytoplasm. The catalysed reaction is succinate semialdehyde + NAD(+) + H2O = succinate + NADH + 2 H(+). The enzyme catalyses succinate semialdehyde + NADP(+) + H2O = succinate + NADPH + 2 H(+). It participates in amino-acid degradation; 4-aminobutanoate degradation. Catalyzes the oxidation of succinate semialdehyde to succinate. Can utilize both NAD(+) or NADP(+) as a coenzyme. Functions in the GABA shunt, which allows to bypass 2 reactions in the TCA cycle by removing alpha-ketoglutarate from the cycle and feeding succinate and NADH back into the cycle. The polypeptide is Succinate-semialdehyde dehydrogenase [NADP(+)] 2 (ssd2) (Schizosaccharomyces pombe (strain 972 / ATCC 24843) (Fission yeast)).